The primary structure comprises 78 residues: Small nuclear ribonucleoprotein F (78 aa).

The 72-residue stretch at 7 to 78 (NPKPFLQGLI…NVLWVGESTV (72 aa)) folds into the Sm domain.

Belongs to the snRNP Sm proteins family. SmF/LSm6 subfamily. Belongs to the 40S cdc5-associated complex (or cwf complex), a spliceosome sub-complex reminiscent of a late-stage spliceosome composed of the U2, U5 and U6 snRNAs and at least brr2, cdc5, cwf2/prp3, cwf3/syf1, cwf4/syf3, cwf5/ecm2, spp42/cwf6, cwf7/spf27, cwf8, cwf9, cwf10, cwf11, cwf12, prp45/cwf13, cwf14, cwf15, cwf16, cwf17, cwf18, cwf19, cwf20, cwf21, cwf22, cwf23, cwf24, cwf25, cwf26, cyp7/cwf27, cwf28, cwf29/ist3, lea1, msl1, prp5/cwf1, prp10, prp12/sap130, prp17, prp22, sap61, sap62, sap114, sap145, slu7, smb1, smd1, smd3, smf1, smg1 and syf2.

The protein localises to the nucleus. It localises to the cytoplasm. Plays a role in pre-mRNA splicing as a core component of the spliceosomal U1, U2, U4 and U5 small nuclear ribonucleoproteins (snRNPs), the building blocks of the spliceosome. The sequence is that of Small nuclear ribonucleoprotein F (smf1) from Schizosaccharomyces pombe (strain 972 / ATCC 24843) (Fission yeast).